The sequence spans 75 residues: MLYPSVDALKKEIDSKYSLVSLASKRARQMQEEQNTERLHKYVSHKYVGKALEEVAAGVLTKVSQDESTVYEDEI.

It belongs to the RNA polymerase subunit omega family. The RNAP catalytic core consists of 2 alpha, 1 beta, 1 beta' and 1 omega subunit. When a sigma factor is associated with the core the holoenzyme is formed, which can initiate transcription.

The catalysed reaction is RNA(n) + a ribonucleoside 5'-triphosphate = RNA(n+1) + diphosphate. Functionally, promotes RNA polymerase assembly. Latches the N- and C-terminal regions of the beta' subunit thereby facilitating its interaction with the beta and alpha subunits. The polypeptide is DNA-directed RNA polymerase subunit omega (Lysinibacillus sphaericus (strain C3-41)).